Here is a 435-residue protein sequence, read N- to C-terminus: Zinc finger CCCH domain-containing protein 67 (435 aa).

The segment at M1–E91 is disordered. 3 consecutive C3H1-type zinc fingers follow at residues R101–R129, N148–E176, and R194–P222. The disordered stretch occupies residues G235–P274. Positions S247–S256 are enriched in low complexity. 2 C3H1-type zinc fingers span residues R334–N362 and R380–P408. The segment at S412–H435 is disordered.

It is found in the nucleus. This chain is Zinc finger CCCH domain-containing protein 67, found in Arabidopsis thaliana (Mouse-ear cress).